Consider the following 780-residue polypeptide: Heat shock protein 90-5, chloroplastic (780 aa).

The N-terminal 60 residues, 1-60 (MAPALSRSLYTSPLTSVPITPVSSRLSHLRSSFLPHGGALRTGVSCSWNLEKRCNRFAVK), are a transit peptide targeting the chloroplast. Residues Glu-106, Asn-110, Asp-152, Met-157, 172-173 (SG), 196-201 (QFGVGF), Thr-251, and Arg-441 contribute to the ATP site. A disordered region spans residues 742–780 (GRVEEEEESSTVNEGDDKSGETEVVEPSEVRAESDPWQD). Basic and acidic residues predominate over residues 769 to 780 (SEVRAESDPWQD).

Belongs to the heat shock protein 90 family. Homodimer. Interacts with VIPP1. Interacts with P23-1. As to expression, expressed in roots, cotyledons, young leaves, mature leaves, stems, flowers, petals and siliques.

The protein localises to the plastid. It is found in the chloroplast stroma. Molecular chaperone required for chloroplast biogenesis. Essential for chloroplast biogenesis and maintenance, and thus for embryogenesis. May be involved in the disassembly of VIPP1 for thylakoid membrane formation and/or maintenance. Cooperates with TIC components and other molecular chaperones to drive transport of preproteins into chloroplasts and functions in the chloroplast stroma to facilitate membrane translocation during protein import into the organelle. In Arabidopsis thaliana (Mouse-ear cress), this protein is Heat shock protein 90-5, chloroplastic.